The following is a 265-amino-acid chain: GTP cyclohydrolase FolE2 (265 aa).

The protein belongs to the GTP cyclohydrolase IV family.

It carries out the reaction GTP + H2O = 7,8-dihydroneopterin 3'-triphosphate + formate + H(+). Its pathway is cofactor biosynthesis; 7,8-dihydroneopterin triphosphate biosynthesis; 7,8-dihydroneopterin triphosphate from GTP: step 1/1. Its function is as follows. Converts GTP to 7,8-dihydroneopterin triphosphate. This chain is GTP cyclohydrolase FolE2, found in Magnetococcus marinus (strain ATCC BAA-1437 / JCM 17883 / MC-1).